A 317-amino-acid polypeptide reads, in one-letter code: MTDKVQTTLLFLAIGEFSVGILGNAFIGLVNCMDWVKKRKIASIDLILTSLAISRICLLCVILLDCFMLVLYPDVYATGKQMRIIDFFWTLTNHLSIWFATCLSIYYFFKIANFFHPLFLWMKWRIDRVISWILLGCMVLSVFINLPATENLNADFRRCVKAKRKTNLTWSCRVTKAQHASTKLFLNLVTLLPFSVCLVSFFLLILSLWRHIRRMQLSATGCRDPSTEAHVRALKAVISFLFLFIAYYLSFLIATSSYFIPETELAVIFGEFIALIYPSSHSFILILGNNKLRRASLKVLWTVMSILKGRKFQQKQI.

Residues 1–9 (MTDKVQTTL) lie on the Extracellular side of the membrane. Residues 10–30 (LFLAIGEFSVGILGNAFIGLV) traverse the membrane as a helical segment. Over 31 to 55 (NCMDWVKKRKIASIDLILTSLAISR) the chain is Cytoplasmic. A helical transmembrane segment spans residues 56-76 (ICLLCVILLDCFMLVLYPDVY). The Extracellular segment spans residues 77-94 (ATGKQMRIIDFFWTLTNH). Residues 95–115 (LSIWFATCLSIYYFFKIANFF) traverse the membrane as a helical segment. Residues 116–128 (HPLFLWMKWRIDR) are Cytoplasmic-facing. Residues 129–149 (VISWILLGCMVLSVFINLPAT) traverse the membrane as a helical segment. The Extracellular segment spans residues 150–187 (ENLNADFRRCVKAKRKTNLTWSCRVTKAQHASTKLFLN). Asparagine 167 is a glycosylation site (N-linked (GlcNAc...) asparagine). Residues 188 to 208 (LVTLLPFSVCLVSFFLLILSL) traverse the membrane as a helical segment. Residues 209-235 (WRHIRRMQLSATGCRDPSTEAHVRALK) lie on the Cytoplasmic side of the membrane. Residues 236 to 256 (AVISFLFLFIAYYLSFLIATS) form a helical membrane-spanning segment. Topologically, residues 257–266 (SYFIPETELA) are extracellular. Residues 267-287 (VIFGEFIALIYPSSHSFILIL) traverse the membrane as a helical segment. Over 288 to 317 (GNNKLRRASLKVLWTVMSILKGRKFQQKQI) the chain is Cytoplasmic.

This sequence belongs to the G-protein coupled receptor T2R family.

It is found in the membrane. Functionally, gustducin-coupled receptor implicated in the perception of bitter compounds in the oral cavity and the gastrointestinal tract. Signals through PLCB2 and the calcium-regulated cation channel TRPM5. The protein is Taste receptor type 2 member 7 (TAS2R7) of Papio hamadryas (Hamadryas baboon).